The chain runs to 187 residues: GTP cyclohydrolase 1 (187 aa).

The Zn(2+) site is built by C74, H77, and C145.

Belongs to the GTP cyclohydrolase I family. As to quaternary structure, homomer.

The enzyme catalyses GTP + H2O = 7,8-dihydroneopterin 3'-triphosphate + formate + H(+). It functions in the pathway cofactor biosynthesis; 7,8-dihydroneopterin triphosphate biosynthesis; 7,8-dihydroneopterin triphosphate from GTP: step 1/1. The sequence is that of GTP cyclohydrolase 1 from Sulfurihydrogenibium sp. (strain YO3AOP1).